The sequence spans 141 residues: Large ribosomal subunit protein uL11 (141 aa).

The protein belongs to the universal ribosomal protein uL11 family. Part of the ribosomal stalk of the 50S ribosomal subunit. Interacts with L10 and the large rRNA to form the base of the stalk. L10 forms an elongated spine to which L12 dimers bind in a sequential fashion forming a multimeric L10(L12)X complex. One or more lysine residues are methylated.

Functionally, forms part of the ribosomal stalk which helps the ribosome interact with GTP-bound translation factors. This is Large ribosomal subunit protein uL11 from Campylobacter jejuni subsp. jejuni serotype O:6 (strain 81116 / NCTC 11828).